The following is a 169-amino-acid chain: Peptide deformylase 1 (169 aa).

Residues cysteine 92 and histidine 134 each coordinate Fe cation. Glutamate 135 is an active-site residue. Fe cation is bound at residue histidine 138.

The protein belongs to the polypeptide deformylase family. Requires Fe(2+) as cofactor.

It catalyses the reaction N-terminal N-formyl-L-methionyl-[peptide] + H2O = N-terminal L-methionyl-[peptide] + formate. Functionally, removes the formyl group from the N-terminal Met of newly synthesized proteins. Requires at least a dipeptide for an efficient rate of reaction. N-terminal L-methionine is a prerequisite for activity but the enzyme has broad specificity at other positions. The sequence is that of Peptide deformylase 1 from Ralstonia nicotianae (strain ATCC BAA-1114 / GMI1000) (Ralstonia solanacearum).